A 271-amino-acid polypeptide reads, in one-letter code: MTDLNIPHTHAHLVDAFQALGIRAGQALMLHASVKAVGAVMGGPNVILQALMDALTPDGTLMMYAGWQDIPDFIDSLPDALKAVYLEQHPPFDPATARAVRENSVLAEFLRTWPCVHRSANPEASMVAVGRQAALLTANHALDYGYGVESPLAKLVAIEGYVLMLGAPLDTITLLHHAEYLAKMRHKNVVRYPCPILRDGRKVWVTVEDYDTGDPHDDYSFEQIARDYVAQGGGTRGKVGDADAYLFAAQDLTRFAVQWLESRFGDSASYG.

5 residues coordinate CoA: His31, Ala32, Ser33, Val34, and Lys35. Tyr64, Asp72, and Glu102 together coordinate a 2-deoxystreptamine antibiotic. CoA-binding residues include Ser104, Val105, and Phe109. A 2-deoxystreptamine antibiotic is bound by residues Glu123, Tyr146, and Asp170. CoA-binding residues include Thr171 and Thr173. Positions 176, 212, 213, and 221 each coordinate a 2-deoxystreptamine antibiotic.

Belongs to the antibiotic N-acetyltransferase family. Homodimer.

It catalyses the reaction a 2-deoxystreptamine antibiotic + acetyl-CoA = an N(3)-acetyl-2-deoxystreptamine antibiotic + CoA + H(+). Functionally, resistance to antibiotics containing the 2-deoxy-streptamine ring including dibekacin, gentamicin, kanamycin, sisomicin, tobramycin and neomycin, but not to amikacin or netilmicin. Acetylates a broad range of both 4,5- and 4,6-disubstituted aminoglycosides, including neomycin, paromomycin, ribostamycin, sisomicin, gentamicin, tobramycin and kanamycin, with no preference of one disubstitution over the other. Acetylates sisomicin and kanamycin most and least efficiently, respectively. Does not modify plazomicin. This Pseudomonas aeruginosa protein is Aminoglycoside N(3)-acetyltransferase III.